Here is a 1373-residue protein sequence, read N- to C-terminus: Inactive tyrosine-protein kinase PRAG1 (1373 aa).

Disordered stretches follow at residues 31–50 and 197–235; these read AGHP…LPAR and TSSC…DSEG. Tyrosine 238 carries the post-translational modification Phosphotyrosine. Basic and acidic residues-rich tracts occupy residues 250-263 and 272-284; these read DAVH…RRGG and QGPR…EEKQ. Positions 250–338 are disordered; it reads DAVHSTEGSG…SGASSPFAPH (89 aa). The segment covering 317–333 has biased composition (low complexity); the sequence is SSSDGLSCGSSRSGASS. Phosphotyrosine occurs at positions 343 and 391. Disordered regions lie at residues 376–448 and 468–794; these read QPAS…NPAP and IYLS…LPQK. The segment covering 419 to 438 has biased composition (polar residues); the sequence is SQGQVWTGDTWIQKTPPSWS. Residues 506–522 are compositionally biased toward basic and acidic residues; the sequence is RESHPHNVTENTAKEKP. Over residues 526–538 the composition is skewed to low complexity; it reads PKLSKSSPGGSPV. Polar residues-rich tracts occupy residues 568–578 and 655–670; these read NLTSSCHTNGV and TSGQ…SKSA. Residues serine 671 and serine 720 each carry the phosphoserine modification. Composition is skewed to polar residues over residues 711–721 and 729–740; these read VSQSSAESLSP and SFTTGSTDSLAS. A phosphoserine mark is found at serine 757 and serine 802. Positions 804–823 are disordered; the sequence is PDGFFWTQGSPKPRTASPKL. The segment at 911 to 954 is required for homodimerization; sequence STQLQLHSLLSSISSKEGTYAKLGGLYTQSLARLVTKCEDLFMG. A Protein kinase domain is found at 945–1296; the sequence is VTKCEDLFMG…EAKRVLQCLL (352 aa). Residues 1041-1050 are compositionally biased toward polar residues; that stretch reads LASPDTSSKD. 2 disordered regions span residues 1041 to 1062 and 1138 to 1171; these read LASP…PPAQ and QSSP…QGGP. Low complexity predominate over residues 1139–1167; sequence SSPGPSATPTVPTTTSRCPSAAPAATTAC. The segment at 1298-1373 is required for homodimerization; that stretch reads GPRRELVEQP…LQSLKLLQLL (76 aa).

This sequence belongs to the protein kinase superfamily. Homodimer. Dimerization leads to the catalytic activation of CSK. Interacts (via C-terminus) with RND2. Interacts with CSK (via SH2 domain) in a Tyr-391 phosphorylation-dependent manner; this interaction potentiates kinase activity of CSK. Interacts with NOTCH1 intracellular domain (N1ICD). Forms a complex with PRAG1, N1ICD and MAML1, in a MAML1-dependent manner. In terms of processing, phosphorylated by CSK on Tyr-238, Tyr-343, and Tyr-391; Tyr-391 is a primary site of phosphorylation.

It is found in the cytoplasm. It localises to the nucleus. The protein localises to the cell junction. Its subcellular location is the focal adhesion. Catalytically inactive protein kinase that acts as a scaffold protein. Functions as an effector of the small GTPase RND2, which stimulates RhoA activity and inhibits NGF-induced neurite outgrowth. Promotes Src family kinase (SFK) signaling by regulating the subcellular localization of CSK, a negative regulator of these kinases, leading to the regulation of cell morphology and motility by a CSK-dependent mechanism. Acts as a critical coactivator of Notch signaling. The sequence is that of Inactive tyrosine-protein kinase PRAG1 from Mus musculus (Mouse).